A 305-amino-acid polypeptide reads, in one-letter code: UDP-3-O-acyl-N-acetylglucosamine deacetylase (305 aa).

3 residues coordinate Zn(2+): His79, His238, and Asp242. Residue His265 is the Proton donor of the active site.

This sequence belongs to the LpxC family. The cofactor is Zn(2+).

It carries out the reaction a UDP-3-O-[(3R)-3-hydroxyacyl]-N-acetyl-alpha-D-glucosamine + H2O = a UDP-3-O-[(3R)-3-hydroxyacyl]-alpha-D-glucosamine + acetate. The protein operates within glycolipid biosynthesis; lipid IV(A) biosynthesis; lipid IV(A) from (3R)-3-hydroxytetradecanoyl-[acyl-carrier-protein] and UDP-N-acetyl-alpha-D-glucosamine: step 2/6. In terms of biological role, catalyzes the hydrolysis of UDP-3-O-myristoyl-N-acetylglucosamine to form UDP-3-O-myristoylglucosamine and acetate, the committed step in lipid A biosynthesis. The chain is UDP-3-O-acyl-N-acetylglucosamine deacetylase from Escherichia coli O45:K1 (strain S88 / ExPEC).